The primary structure comprises 459 residues: Putrescine aminotransferase (459 aa).

Pyridoxal 5'-phosphate contacts are provided by residues 150–151 (GT) and Gln274. Lys300 bears the N6-(pyridoxal phosphate)lysine mark. A pyridoxal 5'-phosphate-binding site is contributed by Thr332.

The protein belongs to the class-III pyridoxal-phosphate-dependent aminotransferase family. Putrescine aminotransferase subfamily. Pyridoxal 5'-phosphate serves as cofactor.

It carries out the reaction an alkane-alpha,omega-diamine + 2-oxoglutarate = an omega-aminoaldehyde + L-glutamate. The enzyme catalyses putrescine + 2-oxoglutarate = 1-pyrroline + L-glutamate + H2O. It catalyses the reaction cadaverine + 2-oxoglutarate = 5-aminopentanal + L-glutamate. Its pathway is amine and polyamine degradation; putrescine degradation; 4-aminobutanal from putrescine (transaminase route): step 1/1. Catalyzes the aminotransferase reaction from putrescine to 2-oxoglutarate, leading to glutamate and 4-aminobutanal, which spontaneously cyclizes to form 1-pyrroline. This is the first step in one of two pathways for putrescine degradation, where putrescine is converted into 4-aminobutanoate (gamma-aminobutyrate or GABA) via 4-aminobutanal. Also functions as a cadaverine transaminase in a a L-lysine degradation pathway to succinate that proceeds via cadaverine, glutarate and L-2-hydroxyglutarate. This chain is Putrescine aminotransferase, found in Salmonella choleraesuis (strain SC-B67).